Consider the following 187-residue polypeptide: MAQERAEHESADQHTTSTGVPHEGQGEPFPPFDSSNFAPLLIWLAISFLLLYALMSKLVLPRIGGILHTRNEKLRSDMHEATALHAQAKEAAALQEKTIADAKAKAIALAQENQAKLRAESDAKQHAVEAELAAKLTAAEARITETKAAAMSNVTAIAQEAASAIVQQFTGKAPDAKKLTAALKAKA.

The segment covering 1-12 has biased composition (basic and acidic residues); sequence MAQERAEHESAD. The segment at 1–31 is disordered; the sequence is MAQERAEHESADQHTTSTGVPHEGQGEPFPP. Residues 40–60 traverse the membrane as a helical segment; it reads LLIWLAISFLLLYALMSKLVL.

The protein belongs to the ATPase B chain family. F-type ATPases have 2 components, F(1) - the catalytic core - and F(0) - the membrane proton channel. F(1) has five subunits: alpha(3), beta(3), gamma(1), delta(1), epsilon(1). F(0) has three main subunits: a(1), b(2) and c(10-14). The alpha and beta chains form an alternating ring which encloses part of the gamma chain. F(1) is attached to F(0) by a central stalk formed by the gamma and epsilon chains, while a peripheral stalk is formed by the delta and b chains.

The protein localises to the cell inner membrane. F(1)F(0) ATP synthase produces ATP from ADP in the presence of a proton or sodium gradient. F-type ATPases consist of two structural domains, F(1) containing the extramembraneous catalytic core and F(0) containing the membrane proton channel, linked together by a central stalk and a peripheral stalk. During catalysis, ATP synthesis in the catalytic domain of F(1) is coupled via a rotary mechanism of the central stalk subunits to proton translocation. Its function is as follows. Component of the F(0) channel, it forms part of the peripheral stalk, linking F(1) to F(0). The b'-subunit is a diverged and duplicated form of b found in plants and photosynthetic bacteria. In Beijerinckia indica subsp. indica (strain ATCC 9039 / DSM 1715 / NCIMB 8712), this protein is ATP synthase subunit b 2 (atpF2).